The primary structure comprises 144 residues: HTH-type transcriptional repressor NsrR (144 aa).

In terms of domain architecture, HTH rrf2-type spans 2 to 129; it reads QLTSFTDYGL…DKHTLLSLID (128 aa). The segment at residues 28 to 51 is a DNA-binding region (H-T-H motif); that stretch reads ISKVTEVYGVSRNHMVKIINKLGQ. Residues Cys-91, Cys-96, and Cys-102 each contribute to the [2Fe-2S] cluster site.

The cofactor is [2Fe-2S] cluster.

Nitric oxide-sensitive repressor of genes involved in protecting the cell against nitrosative stress. May require iron for activity. This is HTH-type transcriptional repressor NsrR from Photobacterium profundum (strain SS9).